The sequence spans 192 residues: Acireductone dioxygenase 2 (192 aa).

Fe(2+)-binding residues include His99, His101, Glu105, and His144. Ni(2+)-binding residues include His99, His101, Glu105, and His144.

It belongs to the acireductone dioxygenase (ARD) family. It depends on Fe(2+) as a cofactor. The cofactor is Ni(2+).

The protein localises to the cytoplasm. It is found in the nucleus. The catalysed reaction is 1,2-dihydroxy-5-(methylsulfanyl)pent-1-en-3-one + O2 = 4-methylsulfanyl-2-oxobutanoate + formate + 2 H(+). It carries out the reaction 1,2-dihydroxy-5-(methylsulfanyl)pent-1-en-3-one + O2 = 3-(methylsulfanyl)propanoate + CO + formate + 2 H(+). It participates in amino-acid biosynthesis; L-methionine biosynthesis via salvage pathway; L-methionine from S-methyl-5-thio-alpha-D-ribose 1-phosphate: step 5/6. Its function is as follows. Catalyzes 2 different reactions between oxygen and the acireductone 1,2-dihydroxy-3-keto-5-methylthiopentene (DHK-MTPene) depending upon the metal bound in the active site. Fe-containing acireductone dioxygenase (Fe-ARD) produces formate and 2-keto-4-methylthiobutyrate (KMTB), the alpha-ketoacid precursor of methionine in the methionine recycle pathway. Ni-containing acireductone dioxygenase (Ni-ARD) produces methylthiopropionate, carbon monoxide and formate, and does not lie on the methionine recycle pathway. The sequence is that of Acireductone dioxygenase 2 (ARD2) from Arabidopsis thaliana (Mouse-ear cress).